A 1895-amino-acid chain; its full sequence is Diacylglycerol kinase eta (1895 aa).

The segment covering 1 to 10 (MAHLKLDTLH) has biased composition (basic and acidic residues). The tract at residues 1–37 (MAHLKLDTLHVQRSPRGSRRSSPSSGRSSACSSGSIS) is disordered. The segment covering 20–37 (RSSPSSGRSSACSSGSIS) has biased composition (low complexity). The PH domain maps to 82–175 (AIIKEGFLLK…WLGSLKTATA (94 aa)). Phorbol-ester/DAG-type zinc fingers lie at residues 195 to 245 (HHHW…IANC) and 267 to 318 (PHQW…AVAC). The DAGKc domain maps to 349-485 (GNFSPLLVFV…DRWSIMVFEK (137 aa)). Disordered stretches follow at residues 781 to 801 (ANID…ENTP), 1012 to 1053 (TTLC…MARL), 1113 to 1137 (QHRG…GANL), and 1172 to 1191 (PNTI…HGQD). Positions 1113–1128 (QHRGGDNDSDYPEHEQ) are enriched in basic and acidic residues. A compositionally biased stretch (polar residues) spans 1172 to 1184 (PNTILTTSTSPTK). In terms of domain architecture, SAM spans 1832–1895 (WSVNEVVTWL…LQAIKDLSEN (64 aa)).

It belongs to the eukaryotic diacylglycerol kinase family.

Its subcellular location is the cytoplasm. The enzyme catalyses a 1,2-diacyl-sn-glycerol + ATP = a 1,2-diacyl-sn-glycero-3-phosphate + ADP + H(+). Phosphorylates diacylglycerol (DAG) to generate phosphatidic acid (PA). The protein is Diacylglycerol kinase eta of Drosophila melanogaster (Fruit fly).